The primary structure comprises 236 residues: Thiol:disulfide interchange protein DsbC (236 aa).

A signal peptide spans 1-20 (MKKGFMLFTLLAAFSGFAQA). In terms of domain architecture, Thioredoxin spans 36–231 (SSDIQPAPVA…MKEFLDEHQK (196 aa)). Intrachain disulfides connect C118/C121 and C161/C183.

This sequence belongs to the thioredoxin family. DsbC subfamily. As to quaternary structure, homodimer.

Its subcellular location is the periplasm. Required for disulfide bond formation in some periplasmic proteins. Acts by transferring its disulfide bond to other proteins and is reduced in the process. DsbC is reoxidized by a yet uncharacterized protein. Also acts as a disulfide isomerase. In Escherichia coli O157:H7, this protein is Thiol:disulfide interchange protein DsbC (dsbC).